The chain runs to 118 residues: Small ribosomal subunit protein uS13 (118 aa).

A disordered region spans residues 94–118; sequence SLPVRGQRTKTNARTRKGPRKPIKK.

It belongs to the universal ribosomal protein uS13 family. In terms of assembly, part of the 30S ribosomal subunit. Forms a loose heterodimer with protein S19. Forms two bridges to the 50S subunit in the 70S ribosome.

Located at the top of the head of the 30S subunit, it contacts several helices of the 16S rRNA. In the 70S ribosome it contacts the 23S rRNA (bridge B1a) and protein L5 of the 50S subunit (bridge B1b), connecting the 2 subunits; these bridges are implicated in subunit movement. Contacts the tRNAs in the A and P-sites. This Haemophilus influenzae (strain 86-028NP) protein is Small ribosomal subunit protein uS13.